We begin with the raw amino-acid sequence, 235 residues long: Transcriptional regulatory protein CseB (235 aa).

The Response regulatory domain occupies 6 to 119 (HVLFVEDDDV…VLVARIRAVL (114 aa)). Residue Asp55 is modified to 4-aspartylphosphate. The ompR/PhoB-type DNA-binding region spans 141–235 (GGVLTFGELE…VRGFGYKLKA (95 aa)).

Phosphorylated by CseC.

It localises to the cytoplasm. Member of the two-component regulatory system CseB/CseC involved in the stability of the cell envelope. CseB activates transcription of RNA polymerase sigma-E factor, in response to changes in the cell envelope. This is Transcriptional regulatory protein CseB (cseB) from Streptomyces avermitilis (strain ATCC 31267 / DSM 46492 / JCM 5070 / NBRC 14893 / NCIMB 12804 / NRRL 8165 / MA-4680).